A 366-amino-acid chain; its full sequence is Anhydro-N-acetylmuramic acid kinase (366 aa).

Residue 12–19 (GTSLDGID) participates in ATP binding.

It belongs to the anhydro-N-acetylmuramic acid kinase family.

It carries out the reaction 1,6-anhydro-N-acetyl-beta-muramate + ATP + H2O = N-acetyl-D-muramate 6-phosphate + ADP + H(+). The protein operates within amino-sugar metabolism; 1,6-anhydro-N-acetylmuramate degradation. It functions in the pathway cell wall biogenesis; peptidoglycan recycling. In terms of biological role, catalyzes the specific phosphorylation of 1,6-anhydro-N-acetylmuramic acid (anhMurNAc) with the simultaneous cleavage of the 1,6-anhydro ring, generating MurNAc-6-P. Is required for the utilization of anhMurNAc either imported from the medium or derived from its own cell wall murein, and thus plays a role in cell wall recycling. In Nitrosospira multiformis (strain ATCC 25196 / NCIMB 11849 / C 71), this protein is Anhydro-N-acetylmuramic acid kinase.